The sequence spans 306 residues: MAFLEVSVQCQERSQARYEEVLESFGALAVTLLDADADTVRERGVFEPGVGETVLWDVVVLSALFPVETDALGLLAGLEGAEPGLDWGGVRFRVVVDEDWERVWMDQFQAMRFGERTFIVPWNQAVPVEASGMDAAVVRLDPGLAFGSGTHPTTGLCLRWLDRLGGDGVLGGGDVLDFGCGSGILALAALKLGAVYAVGVDNDPQALLASRENALRNRVAERLEVYLPAEAPVRRYPVVVANILASTLVALAERLAGYVAPGGRLALSGILRGEEEEVLRCYAVWLDVLGCEEEDGWIRIDGVRRC.

S-adenosyl-L-methionine contacts are provided by Thr154, Gly179, Asp201, and Asn242.

The protein belongs to the methyltransferase superfamily. PrmA family.

It is found in the cytoplasm. The enzyme catalyses L-lysyl-[protein] + 3 S-adenosyl-L-methionine = N(6),N(6),N(6)-trimethyl-L-lysyl-[protein] + 3 S-adenosyl-L-homocysteine + 3 H(+). In terms of biological role, methylates ribosomal protein L11. The polypeptide is Ribosomal protein L11 methyltransferase (Xylella fastidiosa (strain Temecula1 / ATCC 700964)).